We begin with the raw amino-acid sequence, 668 residues long: Penicillin-binding protein 3 (668 aa).

The helical transmembrane segment at leucine 7 to lysine 23 threads the bilayer. Serine 410 functions as the Acyl-ester intermediate in the catalytic mechanism.

This sequence belongs to the transpeptidase family.

It is found in the cell membrane. Its subcellular location is the forespore inner membrane. The protein resides in the forespore outer membrane. It localises to the membrane raft. The enzyme catalyses Preferential cleavage: (Ac)2-L-Lys-D-Ala-|-D-Ala. Also transpeptidation of peptidyl-alanyl moieties that are N-acyl substituents of D-alanine.. It functions in the pathway cell wall biogenesis; peptidoglycan biosynthesis. In terms of biological role, penicillin-binding proteins (PBPs) function in the late steps of murein biosynthesis. Probably required for both cortical and vegetative peptidoglycan synthesis. Although not usually required for cell division, in the absence of PBP 2B (pbpB) it becomes essential. Confers resistance to oxacillin and cephalexin. The sequence is that of Penicillin-binding protein 3 from Bacillus subtilis (strain 168).